We begin with the raw amino-acid sequence, 110 residues long: Large ribosomal subunit protein uL22 (110 aa).

It belongs to the universal ribosomal protein uL22 family. As to quaternary structure, part of the 50S ribosomal subunit.

This protein binds specifically to 23S rRNA; its binding is stimulated by other ribosomal proteins, e.g. L4, L17, and L20. It is important during the early stages of 50S assembly. It makes multiple contacts with different domains of the 23S rRNA in the assembled 50S subunit and ribosome. Its function is as follows. The globular domain of the protein is located near the polypeptide exit tunnel on the outside of the subunit, while an extended beta-hairpin is found that lines the wall of the exit tunnel in the center of the 70S ribosome. This chain is Large ribosomal subunit protein uL22, found in Aliivibrio fischeri (strain MJ11) (Vibrio fischeri).